The sequence spans 346 residues: uncharacterized protein (346 aa).

Histidine 65 contributes to the Zn(2+) binding site. Residue aspartate 67 is part of the active site. Aspartate 89 contacts Zn(2+). Glutamate 115 (proton acceptor) is an active-site residue. 3 residues coordinate Zn(2+): glutamate 116, glutamate 145, and histidine 319.

Belongs to the peptidase M20A family. Requires Zn(2+) as cofactor. Co(2+) serves as cofactor.

This is an uncharacterized protein from Methanocaldococcus jannaschii (strain ATCC 43067 / DSM 2661 / JAL-1 / JCM 10045 / NBRC 100440) (Methanococcus jannaschii).